Reading from the N-terminus, the 157-residue chain is Phosphopantetheine adenylyltransferase (157 aa).

Residue Ser-8 coordinates substrate. ATP contacts are provided by residues 8 to 9 (SF) and His-16. Positions 40, 72, and 86 each coordinate substrate. ATP-binding positions include 87–89 (GLR), Glu-97, and 122–128 (FSFLSSS).

The protein belongs to the bacterial CoaD family. Homohexamer. The cofactor is Mg(2+).

The protein resides in the cytoplasm. The enzyme catalyses (R)-4'-phosphopantetheine + ATP + H(+) = 3'-dephospho-CoA + diphosphate. It participates in cofactor biosynthesis; coenzyme A biosynthesis; CoA from (R)-pantothenate: step 4/5. Reversibly transfers an adenylyl group from ATP to 4'-phosphopantetheine, yielding dephospho-CoA (dPCoA) and pyrophosphate. The polypeptide is Phosphopantetheine adenylyltransferase (Prochlorococcus marinus (strain MIT 9211)).